An 85-amino-acid chain; its full sequence is Large ribosomal subunit protein bL27 (85 aa).

Residues methionine 1 to leucine 21 are disordered.

The protein belongs to the bacterial ribosomal protein bL27 family.

The chain is Large ribosomal subunit protein bL27 from Rhodospirillum rubrum (strain ATCC 11170 / ATH 1.1.1 / DSM 467 / LMG 4362 / NCIMB 8255 / S1).